Reading from the N-terminus, the 406-residue chain is High mobility group nucleosome-binding domain-containing protein 5 (406 aa).

The disordered stretch occupies residues 1–406 (MPKRKAAGDV…GEKEEPLSIV (406 aa)). Thr-29 is subject to Phosphothreonine. Basic residues predominate over residues 35–44 (KRASTSRKTK). Composition is skewed to basic and acidic residues over residues 63–72 (TKPEDVKDEC), 92–101 (MEAEEVKEQI), 110–126 (GEKK…DELK), 136–159 (EDGK…EGLN), and 166–187 (KSED…KGED). Lys-64 is covalently cross-linked (Glycyl lysine isopeptide (Lys-Gly) (interchain with G-Cter in SUMO2)). Lys-98 is covalently cross-linked (Glycyl lysine isopeptide (Lys-Gly) (interchain with G-Cter in SUMO1); alternate). Lys-98 is covalently cross-linked (Glycyl lysine isopeptide (Lys-Gly) (interchain with G-Cter in SUMO2); alternate). A Glycyl lysine isopeptide (Lys-Gly) (interchain with G-Cter in SUMO2) cross-link involves residue Lys-121. Residues 188–200 (GKEEGDEKEEEKD) are compositionally biased toward acidic residues. Basic and acidic residues-rich tracts occupy residues 201–239 (DKEG…KEGQ), 246–266 (EDLH…KEGQ), 272–284 (KEIH…KEGQ), and 290–311 (KEYL…KEGQ). Residues 312-325 (PEEDGKEDQPEEDG) are compositionally biased toward acidic residues. The span at 326–365 (KEGQCKEDGKEGHHEEGGKEDLHEEDGKEKDGGKEDRKEE) shows a compositional bias: basic and acidic residues. Positions 366 to 376 (GEQEVAVDEGS) are enriched in acidic residues. A compositionally biased stretch (basic and acidic residues) spans 377-406 (DENKVEAEEEGAENKDFKQDGEKEEPLSIV).

This sequence belongs to the HMGN family. As to expression, expressed in liver, spleen, lung, heart, kidney, muscle and brain (at protein level). Widely expressed with highest levels in submaxillary gland, thymus, kidney and liver and lowest levels in brain, lung, pancreas and eye.

The protein localises to the nucleus. Its function is as follows. Preferentially binds to euchromatin and modulates cellular transcription by counteracting linker histone-mediated chromatin compaction. The sequence is that of High mobility group nucleosome-binding domain-containing protein 5 (Hmgn5) from Mus musculus (Mouse).